A 167-amino-acid polypeptide reads, in one-letter code: Signal peptidase complex catalytic subunit SEC11 (167 aa).

Topologically, residues 1–12 are cytoplasmic; the sequence is MNLRLELTRFLK. A helical; Signal-anchor for type II membrane protein membrane pass occupies residues 13–30; the sequence is LCFVLSSAFMFWKGLSIA. The Lumenal segment spans residues 31–167; the sequence is TNSHSPIVVV…LGISALLSNE (137 aa). Active-site charge relay system residues include Ser44, His83, and Asp109. Residues 153–164 form a C-terminal short (CTS) helix region; that stretch reads ALMGFLGISALL.

The protein belongs to the peptidase S26B family. Component of the signal peptidase complex (SPC) composed of a catalytic subunit SEC11 and three accessory subunits SPC1, SPC2 and SPC3. The complex induces a local thinning of the ER membrane which is used to measure the length of the signal peptide (SP) h-region of protein substrates. This ensures the selectivity of the complex towards h-regions shorter than 18-20 amino acids. SPC associates with the translocon complex.

It is found in the endoplasmic reticulum membrane. The catalysed reaction is Cleavage of hydrophobic, N-terminal signal or leader sequences from secreted and periplasmic proteins.. Catalytic component of the signal peptidase complex (SPC) which catalyzes the cleavage of N-terminal signal sequences from nascent proteins as they are translocated into the lumen of the endoplasmic reticulum. Specifically cleaves N-terminal signal peptides that contain a hydrophobic alpha-helix (h-region) shorter than 18-20 amino acids. This chain is Signal peptidase complex catalytic subunit SEC11 (SEC11), found in Zygosaccharomyces rouxii (strain ATCC 2623 / CBS 732 / NBRC 1130 / NCYC 568 / NRRL Y-229).